Here is a 151-residue protein sequence, read N- to C-terminus: Ribosome maturation factor RimP (151 aa).

The protein belongs to the RimP family.

Its subcellular location is the cytoplasm. In terms of biological role, required for maturation of 30S ribosomal subunits. This is Ribosome maturation factor RimP from Vibrio campbellii (strain ATCC BAA-1116).